Reading from the N-terminus, the 472-residue chain is Major capsid protein (472 aa).

It belongs to the phi29 phage major capsid protein family.

Its subcellular location is the virion. Its function is as follows. Assembles to form a prolate capsid of about 45x54 nm, with a T=3, Q=5 symmetry. The protein is Major capsid protein (8) of Bacillus phage GA-1 (Bacteriophage GA-1).